We begin with the raw amino-acid sequence, 1248 residues long: Probable serine/threonine-protein kinase DDB_G0278509 (1248 aa).

Disordered regions lie at residues 1-26 (MSKV…NGEY), 40-61 (SVNG…EEDY), 100-125 (QSYK…DHLE), 180-220 (QNNN…TKNN), and 235-338 (SIDS…NNNK). Positions 102 to 117 (YKLSNSGESMNRSINQ) are enriched in polar residues. The span at 181-216 (NNNNNNSNSNSNSNSNSNNNNNNNNNNNNNNNNNNN) shows a compositional bias: low complexity. 13 LRR repeats span residues 386-407 (SSTE…DEKE), 411-432 (GYKI…AFTN), 435-457 (NLEQ…EFLK), 458-480 (HLTI…GNLS), 481-502 (FLRE…GNLY), 503-524 (NLKK…CVEP), 527-548 (QLQT…TTTT), 572-593 (NLKQ…LRHL), 595-616 (KLHS…VVAS), 619-641 (RLAK…NNLS), 642-663 (SLIE…ICYL), 665-687 (NLKK…GFLT), and 688-708 (KLVD…SFLK). The segment at 825 to 873 (YPFQKLDPIPQSLYSSSNPRSHTESDIQKLKNNDETITTTNSSISTTSS) is disordered. Over residues 845 to 858 (SHTESDIQKLKNND) the composition is skewed to basic and acidic residues. A compositionally biased stretch (low complexity) spans 860–873 (TITTTNSSISTTSS). In terms of domain architecture, Protein kinase spans 946 to 1239 (IQFFNLIGQG…SIYHRLENLM (294 aa)). Residues 952–960 (IGQGGFSKV) and K973 each bind ATP. The Proton acceptor role is filled by D1069. Positions 1106-1135 (NNTNNTATSSTTTSSANGANSISNNNNNGT) are disordered.

It belongs to the protein kinase superfamily. TKL Ser/Thr protein kinase family.

It catalyses the reaction L-seryl-[protein] + ATP = O-phospho-L-seryl-[protein] + ADP + H(+). The catalysed reaction is L-threonyl-[protein] + ATP = O-phospho-L-threonyl-[protein] + ADP + H(+). The sequence is that of Probable serine/threonine-protein kinase DDB_G0278509 from Dictyostelium discoideum (Social amoeba).